We begin with the raw amino-acid sequence, 124 residues long: uncharacterized protein (124 aa).

This is an uncharacterized protein from Haemophilus influenzae (strain ATCC 51907 / DSM 11121 / KW20 / Rd).